Reading from the N-terminus, the 429-residue chain is Glutamate-1-semialdehyde 2,1-aminomutase 1 (429 aa).

The residue at position 268 (Lys-268) is an N6-(pyridoxal phosphate)lysine.

Belongs to the class-III pyridoxal-phosphate-dependent aminotransferase family. HemL subfamily. As to quaternary structure, homodimer. Pyridoxal 5'-phosphate is required as a cofactor.

Its subcellular location is the cytoplasm. It carries out the reaction (S)-4-amino-5-oxopentanoate = 5-aminolevulinate. It functions in the pathway porphyrin-containing compound metabolism; protoporphyrin-IX biosynthesis; 5-aminolevulinate from L-glutamyl-tRNA(Glu): step 2/2. This Listeria innocua serovar 6a (strain ATCC BAA-680 / CLIP 11262) protein is Glutamate-1-semialdehyde 2,1-aminomutase 1.